The following is a 193-amino-acid chain: Potassium-transporting ATPase KdpC subunit (193 aa).

A helical membrane pass occupies residues 14-34; that stretch reads ITFTFLVLCGLVYPLIVTGIA.

It belongs to the KdpC family. As to quaternary structure, the system is composed of three essential subunits: KdpA, KdpB and KdpC.

It localises to the cell membrane. Its function is as follows. Part of the high-affinity ATP-driven potassium transport (or Kdp) system, which catalyzes the hydrolysis of ATP coupled with the electrogenic transport of potassium into the cytoplasm. This subunit acts as a catalytic chaperone that increases the ATP-binding affinity of the ATP-hydrolyzing subunit KdpB by the formation of a transient KdpB/KdpC/ATP ternary complex. In Bacillus cereus (strain Q1), this protein is Potassium-transporting ATPase KdpC subunit.